A 130-amino-acid chain; its full sequence is Methylglyoxal synthase (130 aa).

In terms of domain architecture, MGS-like spans methionine 1 to cysteine 130. Substrate-binding positions include histidine 11, lysine 15, threonine 37–threonine 40, and serine 57–glycine 58. Catalysis depends on aspartate 63, which acts as the Proton donor/acceptor. Histidine 90 lines the substrate pocket.

Belongs to the methylglyoxal synthase family.

The catalysed reaction is dihydroxyacetone phosphate = methylglyoxal + phosphate. Catalyzes the formation of methylglyoxal from dihydroxyacetone phosphate. This is Methylglyoxal synthase from Burkholderia cenocepacia (strain HI2424).